A 151-amino-acid polypeptide reads, in one-letter code: MRALIQRVKHASVSVDGHDVGAIEHGVLAYIGLGHDDNLQSAQRMVDKILTYRIFENDDDPAKYGKLDKNVQQVDGGLLLVSQFTLMAKTDKGRRPDFGGAMAPDAAQDLFAQLIAYAKTQHVDVATGQFGADMQVLSVNDGPLNFLLEVP.

Residues 142–143 carry the Gly-cisPro motif, important for rejection of L-amino acids motif; that stretch reads GP.

The protein belongs to the DTD family. Homodimer.

It is found in the cytoplasm. The enzyme catalyses glycyl-tRNA(Ala) + H2O = tRNA(Ala) + glycine + H(+). It catalyses the reaction a D-aminoacyl-tRNA + H2O = a tRNA + a D-alpha-amino acid + H(+). Functionally, an aminoacyl-tRNA editing enzyme that deacylates mischarged D-aminoacyl-tRNAs. Also deacylates mischarged glycyl-tRNA(Ala), protecting cells against glycine mischarging by AlaRS. Acts via tRNA-based rather than protein-based catalysis; rejects L-amino acids rather than detecting D-amino acids in the active site. By recycling D-aminoacyl-tRNA to D-amino acids and free tRNA molecules, this enzyme counteracts the toxicity associated with the formation of D-aminoacyl-tRNA entities in vivo and helps enforce protein L-homochirality. The sequence is that of D-aminoacyl-tRNA deacylase from Psychrobacter arcticus (strain DSM 17307 / VKM B-2377 / 273-4).